The following is a 428-amino-acid chain: Glutamyl-tRNA reductase (428 aa).

Substrate contacts are provided by residues 49-52, S109, 114-116, and Q120; these read TCNR and EGQ. C50 (nucleophile) is an active-site residue. NADP(+) is bound at residue 189–194; that stretch reads GAGKMS.

It belongs to the glutamyl-tRNA reductase family. Homodimer.

It catalyses the reaction (S)-4-amino-5-oxopentanoate + tRNA(Glu) + NADP(+) = L-glutamyl-tRNA(Glu) + NADPH + H(+). The protein operates within porphyrin-containing compound metabolism; protoporphyrin-IX biosynthesis; 5-aminolevulinate from L-glutamyl-tRNA(Glu): step 1/2. It functions in the pathway porphyrin-containing compound metabolism; chlorophyll biosynthesis. Functionally, catalyzes the NADPH-dependent reduction of glutamyl-tRNA(Glu) to glutamate 1-semialdehyde (GSA). This chain is Glutamyl-tRNA reductase, found in Microcystis aeruginosa (strain NIES-843 / IAM M-2473).